A 629-amino-acid polypeptide reads, in one-letter code: MHNKILVSSYILLVLLFSLSSFNIVVAKDGDESGNPFTPKGYVIRYWNKHVSNDLPKPWFLLNKASPLNAAQYATYTKLVADQNALSTHLQSFCSSANLMCAPDLLPSLEKHTGDIHFTTYGNKNFTNYGTNEPGIGVNTFKNYSEDASVNSFRRYGRGSPRDNKFDNYAPDGNVIDQSFNSYSTNTPGGSGQFTNYAPNTNVPDLRFTAYSDQGTGGEQEFKTYLEQGNSGGQSFKSYGKNGNGADSKFTSYGNETNVAASTFKNYGQNANGENQNFTSYSTNGNNPQNNFKNYGVGGNGPSETFTNYRDESNVGDDKFSNYVKDANAGEANFTNYGQSFNEGTDVFITYGKGGNDPHINFKTYGVNNTFKDYVKDTATFSNYHNKTSQDLASLSEVNGGKKVNNRWIEPGKFFREKMLKSGTIMPMPDIKDKMPKRSFLPRAIAAKLPFSTSKIDELKKIFHAANDSQVAKMIGDALSECERAPSPGETKQCVNSAEDMIDFATSVLGRNVVVRTTENTNGSKGNIMIGSIKGINGGKVTKSVSCHQTLYPSLLYYCHSVPKVRVYEADILDPNSKAKINHGVAICHVDTSSWGPRHGAFIALGSGPGKIEVCHWIFENDMTWATAD.

The N-terminal stretch at 1-27 (MHNKILVSSYILLVLLFSLSSFNIVVA) is a signal peptide. Residues 28–109 (KDGDESGNPF…MCAPDLLPSL (82 aa)) constitute a propeptide that is removed on maturation. Asn125, Asn143, Asn255, Asn277, Asn333, Asn368, and Asn386 each carry an N-linked (GlcNAc...) asparagine glycan. Polar residues predominate over residues 267–293 (YGQNANGENQNFTSYSTNGNNPQNNFK). Positions 267-305 (YGQNANGENQNFTSYSTNGNNPQNNFKNYGVGGNGPSET) are disordered. The region spanning 414-628 (FFREKMLKSG…FENDMTWATA (215 aa)) is the BURP domain.

Interacts with polygalacturonase to form heterodimers.

The protein resides in the secreted. It is found in the extracellular space. Its subcellular location is the apoplast. The protein localises to the cell wall. Its function is as follows. Non-catalytic subunit of polygalacturonase. The chain is Polygalacturonase non-catalytic subunit AroGP2 (GP2) from Solanum lycopersicum (Tomato).